A 500-amino-acid polypeptide reads, in one-letter code: L-arabinose isomerase (500 aa).

Mn(2+) is bound by residues E306, E333, H349, and H448.

This sequence belongs to the arabinose isomerase family. The cofactor is Mn(2+).

The enzyme catalyses beta-L-arabinopyranose = L-ribulose. Its pathway is carbohydrate degradation; L-arabinose degradation via L-ribulose; D-xylulose 5-phosphate from L-arabinose (bacterial route): step 1/3. Catalyzes the conversion of L-arabinose to L-ribulose. This Shewanella baltica (strain OS223) protein is L-arabinose isomerase.